Reading from the N-terminus, the 512-residue chain is Probable multidrug resistance protein EmrY (512 aa).

Over 1–8 (MAITKSTP) the chain is Cytoplasmic. The chain crosses the membrane as a helical span at residues 9-29 (APLTGGTLWCVTIALSLATFM). Position 30 (Q30) is a topological domain, periplasmic. A helical transmembrane segment spans residues 31–51 (MLDSTISNVAIPTISGFLGAS). Residues 52–53 (TD) lie on the Cytoplasmic side of the membrane. Residues 54 to 74 (EGTWVITSFGVANAIAIPVTG) form a helical membrane-spanning segment. Residues 75-84 (RLAQRIGELR) lie on the Periplasmic side of the membrane. A run of 2 helical transmembrane segments spans residues 85–105 (LFLL…LSTN) and 106–126 (LDVL…LIPL). Topologically, residues 127-141 (SQSLLLRNYPPEKRT) are periplasmic. Residues 142–162 (FALALWSMTVIIAPICGPILG) traverse the membrane as a helical segment. Residues 163–172 (GYICDNFSWG) are Cytoplasmic-facing. A helical transmembrane segment spans residues 173–193 (WIFLINVPMGIIVLTLCLTLL). The Periplasmic segment spans residues 194–204 (KGRETETSPVK). Residues 205–225 (MNLPGLTLLVLGVGGLQIMLD) traverse the membrane as a helical segment. Residues 226-234 (KGRDLDWFN) lie on the Cytoplasmic side of the membrane. A helical transmembrane segment spans residues 235–255 (SSTIIILTVVSVISLISLVIW). At 256-273 (ESTSENPILDLSLFKSRN) the chain is on the periplasmic side. The helical transmembrane segment at 274-294 (FTIGIVSITCAYLFYSGAIVL) threads the bilayer. Topologically, residues 295 to 307 (MPQLLQETMGYNA) are cytoplasmic. A helical membrane pass occupies residues 308–328 (IWAGLAYAPIGIMPLLISPLI). At 329 to 338 (GRYGNKIDMR) the chain is on the periplasmic side. A helical transmembrane segment spans residues 339–359 (LLVTFSFLMYAVCYYWRSVTF). Over 360 to 364 (MPTID) the chain is Cytoplasmic. A helical transmembrane segment spans residues 365 to 385 (FTGIILPQFFQGFAVACFFLP). The Periplasmic segment spans residues 386–486 (LTTISFSGLP…LSISANEIFR (101 aa)). Residues 487-507 (MAAIAFILLTVLVWFAKPPFT) traverse the membrane as a helical segment. Residues 508 to 512 (AKGVG) are Cytoplasmic-facing.

It belongs to the major facilitator superfamily. EmrB family. In terms of assembly, part of the tripartite efflux system EmrYK-TolC, which is composed of an inner membrane transporter, EmrY, a membrane fusion protein, EmrK, and an outer membrane component, TolC. The complex forms a large protein conduit and can translocate molecules across both the inner and outer membranes.

The protein localises to the cell inner membrane. Part of the tripartite efflux system EmrYK-TolC, which confers resistance to various drugs. The protein is Probable multidrug resistance protein EmrY (emrY) of Escherichia coli (strain K12).